Here is a 1503-residue protein sequence, read N- to C-terminus: Lysophospholipase NTE1 (1503 aa).

The Cytoplasmic portion of the chain corresponds to Met-1–Ser-25. Residues Trp-26–Tyr-46 traverse the membrane as a helical segment. Over Ser-47–Thr-71 the chain is Lumenal. Residues Met-72–Val-92 form a helical membrane-spanning segment. Over Arg-93–Ile-1503 the chain is Cytoplasmic. 3 disordered regions span residues Arg-252–Val-348, Thr-454–Phe-561, and Lys-722–Asp-745. Polar residues-rich tracts occupy residues Thr-262–Arg-272, Ser-285–Gly-302, Gln-487–Pro-496, Lys-506–Leu-542, Pro-552–Phe-561, and Asn-723–Ser-737. Residues Gly-658–Gly-777 and Arg-821–Arg-941 each bind a nucleoside 3',5'-cyclic phosphate. The region spanning Leu-1200–Lys-1364 is the PNPLA domain. The GXGXXG motif lies at Gly-1204–Gly-1209. A GXSXG motif is present at residues Gly-1231–Gly-1235. Catalysis depends on Ser-1233, which acts as the Nucleophile. The Proton acceptor role is filled by Asp-1351. A DGA/G motif is present at residues Asp-1351 to Gly-1353.

Belongs to the NTE family.

The protein localises to the endoplasmic reticulum membrane. The enzyme catalyses a 1-acyl-sn-glycero-3-phosphocholine + H2O = sn-glycerol 3-phosphocholine + a fatty acid + H(+). Its activity is regulated as follows. Inhibited by organophosphorus esters. In terms of biological role, intracellular phospholipase B that catalyzes the double deacylation of phosphatidylcholine (PC) to glycerophosphocholine (GroPCho). Plays an important role in membrane lipid homeostasis. Responsible for the rapid PC turnover in response to inositol, elevated temperatures, or when choline is present in the growth medium. The polypeptide is Lysophospholipase NTE1 (NTE1) (Pyricularia oryzae (strain 70-15 / ATCC MYA-4617 / FGSC 8958) (Rice blast fungus)).